Consider the following 226-residue polypeptide: V-type proton ATPase subunit E 1 (226 aa).

Ala2 carries the post-translational modification N-acetylalanine. Position 56 is a phosphotyrosine (Tyr56).

This sequence belongs to the V-ATPase E subunit family. In terms of assembly, V-ATPase is a heteromultimeric enzyme made up of two complexes: the ATP-hydrolytic V1 complex and the proton translocation V0 complex. The V1 complex consists of three catalytic AB heterodimers that form a heterohexamer, three peripheral stalks each consisting of EG heterodimers, one central rotor including subunits D and F, and the regulatory subunits C and H. The proton translocation complex V0 consists of the proton transport subunit a, a ring of proteolipid subunits c9c'', rotary subunit d, subunits e and f, and the accessory subunits ATP6AP1/Ac45 and ATP6AP2/PRR. Interacts with RABL2/RABL2A; binds preferentially to GTP-bound RABL2. Interacts with ALDOC. Interacts with RAB11B. In terms of tissue distribution, expressed in brain (at protein level).

It localises to the apical cell membrane. It is found in the cytoplasmic vesicle. Its subcellular location is the secretory vesicle. The protein resides in the synaptic vesicle membrane. The protein localises to the clathrin-coated vesicle membrane. Functionally, subunit of the V1 complex of vacuolar(H+)-ATPase (V-ATPase), a multisubunit enzyme composed of a peripheral complex (V1) that hydrolyzes ATP and a membrane integral complex (V0) that translocates protons. V-ATPase is responsible for acidifying and maintaining the pH of intracellular compartments and in some cell types, is targeted to the plasma membrane, where it is responsible for acidifying the extracellular environment. This is V-type proton ATPase subunit E 1 (Atp6v1e1) from Rattus norvegicus (Rat).